The primary structure comprises 653 residues: Epithelial sodium channel subunit gamma (653 aa).

Topologically, residues 1-55 (MAPGEKIKAKIKKNLPVKGPQAPTIKELMRWYCLNTNTHGCRRIVVSPGRLRRLL) are cytoplasmic. Residues 56-76 (WIAFTLTAVGLIFWQCALLVF) traverse the membrane as a helical segment. The Extracellular portion of the chain corresponds to 77-538 (SFYTVSVSIK…EMLLSNFGGQ (462 aa)). 8 disulfides stabilise this stretch: Cys-100–Cys-287, Cys-211–Cys-218, Cys-264–Cys-271, Cys-376–Cys-461, Cys-398–Cys-457, Cys-402–Cys-453, Cys-411–Cys-438, and Cys-413–Cys-427. The segment at 137-225 (RKQRDTESWS…SDCATYTFSS (89 aa)) is gating release of inhibition by proteolysis (GRIP); protease-sensitive region that is responsible for the proteolytic activation of the channel. An N-linked (GlcNAc...) asparagine glycan is attached at Asn-213. Residue Asn-275 is glycosylated (N-linked (GlcNAc...) asparagine). N-linked (GlcNAc...) asparagine glycosylation occurs at Asn-501. Residues 539 to 559 (LGLWMSCSVVCVIEIIEVFFI) form a helical membrane-spanning segment. Residues 560–653 (DSLSIVTRRQ…LADTRLPDEP (94 aa)) lie on the Cytoplasmic side of the membrane. A disordered region spans residues 582–632 (AAPSAEAPSGAQGQENPALEIDDDLPTFTSALSLPPAPGAQVPGTPPPRYN). The PY motif; recruits WW domain-containing proteins and is thereby required for ubiquitination and inhibition of the channel by NEDD4 and NEDD4L motif lies at 627 to 631 (PPPRY).

It belongs to the amiloride-sensitive sodium channel (TC 1.A.6) family. SCNN1G subfamily. In terms of assembly, component of the heterotrimeric epithelial sodium channel (ENaC) composed of an alpha/SCNN1A, a beta/SCNN1B and a gamma/SCNN1G subunit. Interacts with WWP1 (via WW domains). Interacts with WWP2 (via WW domains); inhibits the channel. Interacts with the full-length immature form of PCSK9 (pro-PCSK9); inhibits ENaC by promoting its proteasomal degradation. Interacts with BPIFA1; the interaction is indirect via SCNN1B and inhibits the proteolytic maturation of SCNN1A and SCNN1G and the activation of ENaC. Post-translationally, phosphorylated on serine and threonine residues. Aldosterone and insulin increase the basal level of phosphorylation. Ubiquitinated. Can be ubiquitinated at multiple sites and undergo monoubiquitination and polyubiquitination. Ubiquitination by NEDD4 or NEDD4L inhibits the ENaC channel through endocytosis, intracellular retention and degradation of its individual subunits. In terms of processing, ENaC is activated through the proteolytic maturation of its subunits. Furin cleaves the SCNN1G subunit first, followed by cleavage by prostasin (PRSS8), which results in a stepwise increase in the open probability of the channel due to the release of an inhibitory tract. BPIFA1, which is recruited by the SCNN1B subunit, prevents the proteolytic activation of ENaC. Post-translationally, N-glycosylated. N-linked glycans are processed to complex type during ENaC complex assembly and transport to the plasma membrane.

It localises to the apical cell membrane. The enzyme catalyses Na(+)(in) = Na(+)(out). Its activity is regulated as follows. Originally identified and characterized by its inhibition by the diuretic drug amiloride. Functionally, this is one of the three pore-forming subunits of the heterotrimeric epithelial sodium channel (ENaC), a critical regulator of sodium balance and fluid homeostasis. ENaC operates in epithelial tissues, where it mediates the electrodiffusion of sodium ions from extracellular fluid through the apical membrane of cells, with water following osmotically. It plays a key role in maintaining sodium homeostasis through electrogenic sodium reabsorption in the kidneys. Additionally, ENaC is essential for airway surface liquid homeostasis, which is crucial for proper mucus clearance. This is Epithelial sodium channel subunit gamma from Oryctolagus cuniculus (Rabbit).